A 713-amino-acid polypeptide reads, in one-letter code: Forkhead box protein P2 (713 aa).

Positions 1–28 (MMQESVTETISNSSMNQNGMSTLSSQLD) are enriched in polar residues. Disordered regions lie at residues 1–44 (MMQE…SSEV) and 279–337 (DNGI…TGAS). Low complexity predominate over residues 290–303 (TTNNSSSTTSSTTS). Over residues 313-322 (SIVNGQSSVL) the composition is skewed to polar residues. A compositionally biased stretch (basic and acidic residues) spans 324-335 (ARRDSSSHEETG). The C2H2-type zinc finger occupies 344–369 (GVCKWPGCESICEDFGQFLKHLNNEH). Positions 386–407 (VQQLEIQLSKERERLQAMMTHL) are leucine-zipper. The tract at residues 420-424 (PLNLV) is CTBP1-binding. The segment covering 436–457 (TSPQSLPQTPTTPTAPVTPITQ) has biased composition (low complexity). The tract at residues 436–463 (TSPQSLPQTPTTPTAPVTPITQGPSVIT) is disordered. The segment at residues 502 to 592 (RPPFTYATLI…SQKITGSPTL (91 aa)) is a DNA-binding region (fork-head). Disordered stretches follow at residues 647 to 666 (LDHI…QPHI) and 676 to 713 (VIAE…EDLE). Residues 697 to 713 (LEDDREIEEEPLSEDLE) show a composition bias toward acidic residues.

Forms homodimers and heterodimers with FOXP1 and FOXP4. Dimerization is required for DNA-binding. Interacts with CTBP1. Interacts with FOXP1. Interacts with TBR1. Interacts with ZMYM2.

It is found in the nucleus. Its function is as follows. Transcriptional repressor that may play a role in the specification and differentiation of lung epithelium. May also play a role in developing neural, gastrointestinal and cardiovascular tissues. Can act with CTBP1 to synergistically repress transcription but CTPBP1 is not essential. Plays a role in synapse formation by regulating SRPX2 levels. This chain is Forkhead box protein P2 (FOXP2), found in Pongo pygmaeus (Bornean orangutan).